A 371-amino-acid polypeptide reads, in one-letter code: tRNA/tmRNA (uracil-C(5))-methyltransferase (371 aa).

Residues Gln-194, Tyr-223, Asn-228, Glu-244, and Asp-304 each coordinate S-adenosyl-L-methionine. Residue Cys-329 is the Nucleophile of the active site. The active-site Proton acceptor is the Glu-363.

It belongs to the class I-like SAM-binding methyltransferase superfamily. RNA M5U methyltransferase family. TrmA subfamily.

It carries out the reaction uridine(54) in tRNA + S-adenosyl-L-methionine = 5-methyluridine(54) in tRNA + S-adenosyl-L-homocysteine + H(+). The catalysed reaction is uridine(341) in tmRNA + S-adenosyl-L-methionine = 5-methyluridine(341) in tmRNA + S-adenosyl-L-homocysteine + H(+). Functionally, dual-specificity methyltransferase that catalyzes the formation of 5-methyluridine at position 54 (m5U54) in all tRNAs, and that of position 341 (m5U341) in tmRNA (transfer-mRNA). The protein is tRNA/tmRNA (uracil-C(5))-methyltransferase of Sulfurovum sp. (strain NBC37-1).